A 465-amino-acid chain; its full sequence is Ribulose bisphosphate carboxylase large chain (465 aa).

Lys4 is subject to N6,N6,N6-trimethyllysine. Substrate-binding residues include Asn113 and Thr163. Lys165 serves as the catalytic Proton acceptor. Position 167 (Lys167) interacts with substrate. 3 residues coordinate Mg(2+): Lys191, Asp193, and Glu194. Position 191 is an N6-carboxylysine (Lys191). The active-site Proton acceptor is His284. Substrate is bound by residues Arg285, His317, and Ser369.

Belongs to the RuBisCO large chain family. Type I subfamily. Heterohexadecamer of 8 large chains and 8 small chains; disulfide-linked. The disulfide link is formed within the large subunit homodimers. The cofactor is Mg(2+). The disulfide bond which can form in the large chain dimeric partners within the hexadecamer appears to be associated with oxidative stress and protein turnover.

The protein resides in the plastid. It localises to the chloroplast. It catalyses the reaction 2 (2R)-3-phosphoglycerate + 2 H(+) = D-ribulose 1,5-bisphosphate + CO2 + H2O. It carries out the reaction D-ribulose 1,5-bisphosphate + O2 = 2-phosphoglycolate + (2R)-3-phosphoglycerate + 2 H(+). RuBisCO catalyzes two reactions: the carboxylation of D-ribulose 1,5-bisphosphate, the primary event in carbon dioxide fixation, as well as the oxidative fragmentation of the pentose substrate in the photorespiration process. Both reactions occur simultaneously and in competition at the same active site. This chain is Ribulose bisphosphate carboxylase large chain, found in Ilex crenata (Japanese holly).